Reading from the N-terminus, the 196-residue chain is DNA replication complex GINS protein PSF1 (196 aa).

This sequence belongs to the GINS1/PSF1 family. In terms of assembly, component of the GINS complex which is a heterotetramer of gins1/psf1, gins2/psf2, gins3/psf3 and gins4/sld5. Component of the CMG helicase complex, composed of the mcm2-7 complex, the GINS complex and cdc45.

The protein resides in the nucleus. The protein localises to the chromosome. Its function is as follows. Required for correct functioning of the GINS complex, a complex that plays an essential role in the initiation of DNA replication, and progression of DNA replication forks. GINS complex is a core component of CDC45-MCM-GINS (CMG) helicase, the molecular machine that unwinds template DNA during replication, and around which the replisome is built. The protein is DNA replication complex GINS protein PSF1 of Xenopus laevis (African clawed frog).